The sequence spans 264 residues: Phosphonoacetaldehyde hydrolase (264 aa).

Asp-9 (nucleophile) is an active-site residue. Mg(2+) is bound by residues Asp-9 and Ala-11. The Schiff-base intermediate with substrate role is filled by Lys-50. Residue Asp-183 coordinates Mg(2+).

Belongs to the HAD-like hydrolase superfamily. PhnX family. As to quaternary structure, homodimer. Mg(2+) serves as cofactor.

It carries out the reaction phosphonoacetaldehyde + H2O = acetaldehyde + phosphate + H(+). In terms of biological role, involved in phosphonate degradation. This chain is Phosphonoacetaldehyde hydrolase, found in Bacillus cereus (strain ATCC 10987 / NRS 248).